The primary structure comprises 207 residues: MSETSLLIPKTNSPASSENMANTNKSLTGLESLIKLLPTGTLFIYLLLNPVLTNDGECSTGNKVMSSILVALCSFSCVFSCFTDSFKGVDGSRKFGIVTKKGLWTYAEPGSVDLSKYKLRIADFVHAGFVLAVFGTLVLLDANTASCFYPRFRETQKTLVMALPPAVGVASATIFALFPSKRSGIGYAPIAEEVGAEEETKKASVSA.

The disordered stretch occupies residues 1–20; the sequence is MSETSLLIPKTNSPASSENM. Helical transmembrane passes span 33 to 53, 64 to 84, 121 to 141, and 159 to 179; these read LIKL…PVLT, VMSS…CFTD, IADF…VLLD, and LVMA…ALFP.

Belongs to the plant DMP1 protein family. In terms of tissue distribution, expressed in leaves, siliques and roots.

Its subcellular location is the endoplasmic reticulum membrane. It localises to the vacuole membrane. Functionally, involved in membrane remodeling including fission during breakdown of the endoplasmic reticulum (ER) and the tonoplast during leaf senescence and in membrane fusion during vacuole biogenesis in roots. This is Protein DMP1 from Arabidopsis thaliana (Mouse-ear cress).